A 137-amino-acid polypeptide reads, in one-letter code: Cellular retinoic acid-binding protein 1 (137 aa).

The short motif at 21 to 31 (KALGVNTMLRK) is the Nuclear localization signal element. 132 to 134 (RIY) contacts all-trans-retinoate.

Belongs to the calycin superfamily. Fatty-acid binding protein (FABP) family.

The protein resides in the cytoplasm. Cytosolic CRABPs may regulate the access of retinoic acid to the nuclear retinoic acid receptors. The protein is Cellular retinoic acid-binding protein 1 (crabp1) of Takifugu rubripes (Japanese pufferfish).